A 139-amino-acid chain; its full sequence is Lysozyme (139 aa).

The first 19 residues, 1 to 19 (MTKYVILLAVLAFALHCDA), serve as a signal peptide directing secretion. The region spanning 20–139 (KRFTRCGLVQ…QHGLPDISDC (120 aa)) is the C-type lysozyme domain. Cystine bridges form between Cys25/Cys139, Cys46/Cys129, Cys81/Cys95, and Cys91/Cys109. Active-site residues include Glu51 and Asp69.

It belongs to the glycosyl hydrolase 22 family.

The catalysed reaction is Hydrolysis of (1-&gt;4)-beta-linkages between N-acetylmuramic acid and N-acetyl-D-glucosamine residues in a peptidoglycan and between N-acetyl-D-glucosamine residues in chitodextrins.. Its function is as follows. Lysozymes have primarily a bacteriolytic function; those in tissues and body fluids are associated with the monocyte-macrophage system and enhance the activity of immunoagents. In Hyalophora cecropia (Cecropia moth), this protein is Lysozyme.